The sequence spans 134 residues: Large ribosomal subunit protein bL21 (134 aa).

It belongs to the bacterial ribosomal protein bL21 family. As to quaternary structure, part of the 50S ribosomal subunit. Contacts protein L20.

In terms of biological role, this protein binds to 23S rRNA in the presence of protein L20. The polypeptide is Large ribosomal subunit protein bL21 (Pelagibacter ubique (strain HTCC1062)).